Here is a 415-residue protein sequence, read N- to C-terminus: Squalene synthase clz20 (415 aa).

Asn-114 carries an N-linked (GlcNAc...) asparagine glycan. Residues 395–415 (ADTMYLAVLVLGVFGVVAAIL) form a helical membrane-spanning segment.

This sequence belongs to the phytoene/squalene synthase family. Mg(2+) is required as a cofactor.

It localises to the membrane. It carries out the reaction 2 (2E,6E)-farnesyl diphosphate + NADH + H(+) = squalene + 2 diphosphate + NAD(+). The catalysed reaction is 2 (2E,6E)-farnesyl diphosphate + NADPH + H(+) = squalene + 2 diphosphate + NADP(+). It participates in terpene metabolism; lanosterol biosynthesis; lanosterol from farnesyl diphosphate: step 1/3. In terms of biological role, squalene synthase; part of the gene cluster that mediates the biosynthesis of squalestatin S1 (SQS1, also known as zaragozic acid A), a heavily oxidized fungal polyketide that offers potent cholesterol lowering activity by targeting squalene synthase (SS). Catalyzes the condensation of 2 two farnesyl pyrophosphate moieties to form squalene. The presence of a gene encoding a squalene synthase supports the identification of the cluster as being responsible for SQS1 production and suggests a likely mechanism for self-resistance. The chain is Squalene synthase clz20 from Cochliobolus lunatus (Filamentous fungus).